Here is a 30-residue protein sequence, read N- to C-terminus: Photosystem I reaction center subunit XII (30 aa).

The helical transmembrane segment at I7–K26 threads the bilayer.

It belongs to the PsaM family.

It localises to the plastid. Its subcellular location is the chloroplast thylakoid membrane. The sequence is that of Photosystem I reaction center subunit XII from Porphyra purpurea (Red seaweed).